The chain runs to 80 residues: NADH-ubiquinone oxidoreductase chain 5 (80 aa).

2 consecutive transmembrane segments (helical) span residues 4-24 and 44-64; these read ISFLVLVSISFSMFLLSLNFM and IVMTFLFDWMSLLFMSFVLLI.

Belongs to the complex I subunit 5 family.

The protein resides in the mitochondrion inner membrane. It carries out the reaction a ubiquinone + NADH + 5 H(+)(in) = a ubiquinol + NAD(+) + 4 H(+)(out). Its function is as follows. Core subunit of the mitochondrial membrane respiratory chain NADH dehydrogenase (Complex I) that is believed to belong to the minimal assembly required for catalysis. Complex I functions in the transfer of electrons from NADH to the respiratory chain. The immediate electron acceptor for the enzyme is believed to be ubiquinone. This chain is NADH-ubiquinone oxidoreductase chain 5 (ND5), found in Ceratitis capitata (Mediterranean fruit fly).